The following is a 449-amino-acid chain: Phosphoglucosamine mutase (449 aa).

The active-site Phosphoserine intermediate is Ser-100. Ser-100, Asp-241, Asp-243, and Asp-245 together coordinate Mg(2+). The residue at position 100 (Ser-100) is a Phosphoserine.

It belongs to the phosphohexose mutase family. Requires Mg(2+) as cofactor. Post-translationally, activated by phosphorylation.

It catalyses the reaction alpha-D-glucosamine 1-phosphate = D-glucosamine 6-phosphate. Its function is as follows. Catalyzes the conversion of glucosamine-6-phosphate to glucosamine-1-phosphate. This is Phosphoglucosamine mutase from Geobacillus kaustophilus (strain HTA426).